A 229-amino-acid polypeptide reads, in one-letter code: Uracil-DNA glycosylase (229 aa).

Catalysis depends on D70, which acts as the Proton acceptor.

This sequence belongs to the uracil-DNA glycosylase (UDG) superfamily. UNG family.

The protein resides in the cytoplasm. It catalyses the reaction Hydrolyzes single-stranded DNA or mismatched double-stranded DNA and polynucleotides, releasing free uracil.. Functionally, excises uracil residues from the DNA which can arise as a result of misincorporation of dUMP residues by DNA polymerase or due to deamination of cytosine. The chain is Uracil-DNA glycosylase from Chlamydia felis (strain Fe/C-56) (Chlamydophila felis).